The chain runs to 262 residues: Putative cysteine-rich repeat secretory protein 24 (262 aa).

The signal sequence occupies residues 1 to 29; that stretch reads MSLSSSVTKHLISASILAIVAMQLPSVHS. 2 Gnk2-homologous domains span residues 39 to 141 and 147 to 259; these read YLHH…SIYT and YKNN…LYPF.

Belongs to the cysteine-rich repeat secretory protein family.

The protein localises to the secreted. This is Putative cysteine-rich repeat secretory protein 24 (CRRSP24) from Arabidopsis thaliana (Mouse-ear cress).